A 122-amino-acid chain; its full sequence is Small ribosomal subunit protein uS13 (122 aa).

The segment at 99–122 (RGQRTHTNARTRKGPAKAIAGKKK) is disordered.

This sequence belongs to the universal ribosomal protein uS13 family. As to quaternary structure, part of the 30S ribosomal subunit. Forms a loose heterodimer with protein S19. Forms two bridges to the 50S subunit in the 70S ribosome.

Located at the top of the head of the 30S subunit, it contacts several helices of the 16S rRNA. In the 70S ribosome it contacts the 23S rRNA (bridge B1a) and protein L5 of the 50S subunit (bridge B1b), connecting the 2 subunits; these bridges are implicated in subunit movement. Contacts the tRNAs in the A and P-sites. This is Small ribosomal subunit protein uS13 from Parvibaculum lavamentivorans (strain DS-1 / DSM 13023 / NCIMB 13966).